The sequence spans 438 residues: Phosphoribosylamine--glycine ligase (438 aa).

Residues 108–316 (REFMERNDIP…LVEIAEGIVK (209 aa)) form the ATP-grasp domain. 135–194 (IDEYGKPVVVKPLGLTGGKGVKVVGYQLKDNEEAKEYAEYLIKKDGKVLIEERTDGVEFT) is an ATP binding site. Glutamine 274, glutamate 286, and asparagine 288 together coordinate Mg(2+). Mn(2+)-binding residues include glutamine 274, glutamate 286, and asparagine 288.

It belongs to the GARS family. Requires Mg(2+) as cofactor. The cofactor is Mn(2+).

It carries out the reaction 5-phospho-beta-D-ribosylamine + glycine + ATP = N(1)-(5-phospho-beta-D-ribosyl)glycinamide + ADP + phosphate + H(+). It participates in purine metabolism; IMP biosynthesis via de novo pathway; N(1)-(5-phospho-D-ribosyl)glycinamide from 5-phospho-alpha-D-ribose 1-diphosphate: step 2/2. This is Phosphoribosylamine--glycine ligase from Pyrococcus abyssi (strain GE5 / Orsay).